Here is a 270-residue protein sequence, read N- to C-terminus: MEEGVSIYLVSDSNVDTAENIASIAAAHFDTFIEKIKKYPYVGDKNQIEEIIMEAANDANSIIIHTMVVPELKDYLLKKAQKFGIKIVDVMGPVINAIEDSTGISPHTNLAKNNKEDYLKKIEVIEFAVKYDDGKDAMGILLADVVVIGVSRTSKTPLCMYLAHKYIKAANLPLVPEIEPPQELFEINPKKIFGLTIDPEVLVKIRKERLKSLGLDANAIYATEERVKKEIKYAEEVMKRLGCTVIDVTNKAVEETANVILNVLKGGEIS.

ADP is bound at residue 149-156; sequence GVSRTSKT.

The protein belongs to the pyruvate, phosphate/water dikinase regulatory protein family. PDRP subfamily.

It carries out the reaction N(tele)-phospho-L-histidyl/L-threonyl-[pyruvate, phosphate dikinase] + ADP = N(tele)-phospho-L-histidyl/O-phospho-L-threonyl-[pyruvate, phosphate dikinase] + AMP + H(+). The catalysed reaction is N(tele)-phospho-L-histidyl/O-phospho-L-threonyl-[pyruvate, phosphate dikinase] + phosphate + H(+) = N(tele)-phospho-L-histidyl/L-threonyl-[pyruvate, phosphate dikinase] + diphosphate. Functionally, bifunctional serine/threonine kinase and phosphorylase involved in the regulation of the pyruvate, phosphate dikinase (PPDK) by catalyzing its phosphorylation/dephosphorylation. This chain is Putative pyruvate, phosphate dikinase regulatory protein, found in Thermoanaerobacter pseudethanolicus (strain ATCC 33223 / 39E) (Clostridium thermohydrosulfuricum).